The primary structure comprises 629 residues: DNA topoisomerase 4 subunit B (629 aa).

Residues Y4, N41, D68, G109–I115, and K333 each bind ATP. The region spanning A411–P524 is the Toprim domain. Mg(2+) is bound by residues E417, D489, and D491.

Belongs to the type II topoisomerase family. ParE type 1 subfamily. Heterotetramer composed of ParC and ParE. Requires Mg(2+) as cofactor. It depends on Mn(2+) as a cofactor. The cofactor is Ca(2+).

The catalysed reaction is ATP-dependent breakage, passage and rejoining of double-stranded DNA.. Functionally, topoisomerase IV is essential for chromosome segregation. It relaxes supercoiled DNA. Performs the decatenation events required during the replication of a circular DNA molecule. This Pseudomonas aeruginosa (strain ATCC 15692 / DSM 22644 / CIP 104116 / JCM 14847 / LMG 12228 / 1C / PRS 101 / PAO1) protein is DNA topoisomerase 4 subunit B.